The sequence spans 264 residues: MFNLSDFSELPRWIGAEFLGTFFLILSGNGAGSQLTLNKMFAKESKAKLLTAAFAWGIAVLVGVLIANSLFEGAGNINPAVSLFYAVSGTIQKALYPLHVNFSIPLLWVALLLAWVAQFAGAMLAQALLNFLFWKHIEQTDPQSVLVTHCTNPAIFNIPRNFATEFVATSVLIASLLVAGSFGANRFDQSPRGVVPMLVVTGLIMSFGAATGTAINPARDLGPRIVYWLSPIKNKDPNLKYSWIPVAAPLSASVILGVLVAVIV.

2 helical membrane passes run 13 to 33 and 51 to 71; these read WIGA…GAGS and TAAF…NSLF. The NPA 1 signature appears at 78-80; the sequence is NPA. Transmembrane regions (helical) follow at residues 104–124, 162–182, and 195–215; these read IPLL…GAML, FATE…AGSF, and VPML…GTAI. An NPA 2 motif is present at residues 216-218; it reads NPA. Residues 244–264 traverse the membrane as a helical segment; it reads IPVAAPLSASVILGVLVAVIV.

This sequence belongs to the MIP/aquaporin (TC 1.A.8) family.

It is found in the cell membrane. The catalysed reaction is glycerol(in) = glycerol(out). Functionally, mediates glycerol diffusion across the cytoplasmic membrane via a pore-type mechanism. The chain is Probable glycerol uptake facilitator protein (glpF) from Mycoplasma pneumoniae (strain ATCC 29342 / M129 / Subtype 1) (Mycoplasmoides pneumoniae).